Here is a 386-residue protein sequence, read N- to C-terminus: Succinate--CoA ligase [ADP-forming] subunit beta (386 aa).

The region spanning 9-244 (KEILRKYGVP…HDEEDPLETR (236 aa)) is the ATP-grasp domain. Residues lysine 46, 53-55 (GRG), glutamate 99, cysteine 102, and glutamate 107 contribute to the ATP site. Mg(2+) contacts are provided by asparagine 199 and aspartate 213. Residues asparagine 264 and 321 to 323 (GIM) contribute to the substrate site.

The protein belongs to the succinate/malate CoA ligase beta subunit family. As to quaternary structure, heterotetramer of two alpha and two beta subunits. Requires Mg(2+) as cofactor.

It catalyses the reaction succinate + ATP + CoA = succinyl-CoA + ADP + phosphate. It carries out the reaction GTP + succinate + CoA = succinyl-CoA + GDP + phosphate. Its pathway is carbohydrate metabolism; tricarboxylic acid cycle; succinate from succinyl-CoA (ligase route): step 1/1. Succinyl-CoA synthetase functions in the citric acid cycle (TCA), coupling the hydrolysis of succinyl-CoA to the synthesis of either ATP or GTP and thus represents the only step of substrate-level phosphorylation in the TCA. The beta subunit provides nucleotide specificity of the enzyme and binds the substrate succinate, while the binding sites for coenzyme A and phosphate are found in the alpha subunit. The sequence is that of Succinate--CoA ligase [ADP-forming] subunit beta from Rickettsia prowazekii (strain Madrid E).